A 332-amino-acid chain; its full sequence is Ornithine carbamoyltransferase, catabolic (332 aa).

Residues 60-63, Gln87, Arg111, and 138-141 contribute to the carbamoyl phosphate site; these read STRT and HPTQ. L-ornithine-binding positions include Asn170, Asp230, and 234–235; that span reads SM. Carbamoyl phosphate-binding positions include 271–272 and Arg316; that span reads CL.

This sequence belongs to the aspartate/ornithine carbamoyltransferase superfamily. OTCase family.

The protein resides in the cytoplasm. The catalysed reaction is carbamoyl phosphate + L-ornithine = L-citrulline + phosphate + H(+). The protein operates within amino-acid degradation; L-arginine degradation via ADI pathway; carbamoyl phosphate from L-arginine: step 2/2. Reversibly catalyzes the transfer of the carbamoyl group from carbamoyl phosphate (CP) to the N(epsilon) atom of ornithine (ORN) to produce L-citrulline. The chain is Ornithine carbamoyltransferase, catabolic (arcB) from Bacillus cereus (strain ATCC 14579 / DSM 31 / CCUG 7414 / JCM 2152 / NBRC 15305 / NCIMB 9373 / NCTC 2599 / NRRL B-3711).